A 225-amino-acid chain; its full sequence is Transcriptional regulatory protein AfsQ1 (225 aa).

The region spanning 3–116 (SLLLIEDDDA…VLDARIRAVL (114 aa)) is the Response regulatory domain. 4-aspartylphosphate is present on Asp-52. The segment at residues 124–223 (TDSASFGSLV…VRGVGYRLDP (100 aa)) is a DNA-binding region (ompR/PhoB-type).

In terms of processing, phosphorylated by AfsQ2.

It localises to the cytoplasm. The protein resides in the nucleoid. In terms of biological role, forms part of a two-component regulatory system AfsQ1/AfsQ2 involved in secondary metabolism. In Streptomyces coelicolor (strain ATCC BAA-471 / A3(2) / M145), this protein is Transcriptional regulatory protein AfsQ1.